The sequence spans 98 residues: NADH-ubiquinone oxidoreductase chain 4L (98 aa).

Transmembrane regions (helical) follow at residues 1–21 (MTPTYMNIMLAFTISLLGMLI), 29–49 (SLLCLEGMMMSLFIMTTLIAL), and 61–81 (IILLVFAACEAAVGLALLVSI).

This sequence belongs to the complex I subunit 4L family. As to quaternary structure, core subunit of respiratory chain NADH dehydrogenase (Complex I) which is composed of 45 different subunits.

The protein resides in the mitochondrion inner membrane. It catalyses the reaction a ubiquinone + NADH + 5 H(+)(in) = a ubiquinol + NAD(+) + 4 H(+)(out). In terms of biological role, core subunit of the mitochondrial membrane respiratory chain NADH dehydrogenase (Complex I) which catalyzes electron transfer from NADH through the respiratory chain, using ubiquinone as an electron acceptor. Part of the enzyme membrane arm which is embedded in the lipid bilayer and involved in proton translocation. The polypeptide is NADH-ubiquinone oxidoreductase chain 4L (MT-ND4L) (Macaca maura (Moor macaque)).